Consider the following 208-residue polypeptide: Probable very-long-chain (3R)-3-hydroxyacyl-CoA dehydratase (208 aa).

Topologically, residues 1 to 11 are cytoplasmic; it reads MSKILKIQYLK. The chain crosses the membrane as a helical span at residues 12-35; the sequence is LYNVISCFLWMSVLLRTGLIWGIT. Residues 36–46 lie on the Lumenal side of the membrane; it reads KDTAVVFHETN. The helical transmembrane segment at 47 to 67 threads the bilayer; that stretch reads TLVRWVQTLAIAEVFHSIFGL. Residues 68–78 are Cytoplasmic-facing; sequence VSSSPLTTIIQ. The chain crosses the membrane as a helical span at residues 79–97; that stretch reads VASRLYLVWGVCYPFSYVI. The Lumenal segment spans residues 98 to 102; the sequence is EGSPI. The helical transmembrane segment at 103–123 threads the bilayer; the sequence is YLSMIIAWSITEIIRYAFYAF. Over 124-134 the chain is Cytoplasmic; it reads NLNGDIPAFLT. A helical transmembrane segment spans residues 135 to 157; sequence WLRYNTFLILYPIGAGSEFLLVL. Residues tyrosine 145 and glutamate 152 contribute to the active site. Topologically, residues 158-171 are lumenal; that stretch reads KSRIAAQYVWSLNK. The helical transmembrane segment at 172–192 threads the bilayer; the sequence is LLWPILMSIYPPGLYIMYTHM. The Cytoplasmic segment spans residues 193–208; sequence LAQRRKISKRAAARRT.

Belongs to the very long-chain fatty acids dehydratase HACD family.

It is found in the endoplasmic reticulum membrane. It carries out the reaction a very-long-chain (3R)-3-hydroxyacyl-CoA = a very-long-chain (2E)-enoyl-CoA + H2O. Its pathway is lipid metabolism; fatty acid biosynthesis. In terms of biological role, catalyzes the third of the four reactions of the long-chain fatty acids elongation cycle. This endoplasmic reticulum-bound enzymatic process, allows the addition of two carbons to the chain of long- and very long-chain fatty acids/VLCFAs per cycle. This enzyme catalyzes the dehydration of the 3-hydroxyacyl-CoA intermediate into trans-2,3-enoyl-CoA, within each cycle of fatty acid elongation. Thereby, it participates in the production of VLCFAs of different chain lengths that are involved in multiple biological processes as precursors of membrane lipids and lipid mediators. The protein is Probable very-long-chain (3R)-3-hydroxyacyl-CoA dehydratase of Schizosaccharomyces pombe (strain 972 / ATCC 24843) (Fission yeast).